We begin with the raw amino-acid sequence, 297 residues long: Phosphatidylserine decarboxylase proenzyme (297 aa).

Catalysis depends on charge relay system; for autoendoproteolytic cleavage activity residues aspartate 92, histidine 149, and serine 254. Serine 254 functions as the Schiff-base intermediate with substrate; via pyruvic acid; for decarboxylase activity in the catalytic mechanism. A Pyruvic acid (Ser); by autocatalysis modification is found at serine 254.

Belongs to the phosphatidylserine decarboxylase family. PSD-B subfamily. Prokaryotic type I sub-subfamily. In terms of assembly, heterodimer of a large membrane-associated beta subunit and a small pyruvoyl-containing alpha subunit. The cofactor is pyruvate. Is synthesized initially as an inactive proenzyme. Formation of the active enzyme involves a self-maturation process in which the active site pyruvoyl group is generated from an internal serine residue via an autocatalytic post-translational modification. Two non-identical subunits are generated from the proenzyme in this reaction, and the pyruvate is formed at the N-terminus of the alpha chain, which is derived from the carboxyl end of the proenzyme. The autoendoproteolytic cleavage occurs by a canonical serine protease mechanism, in which the side chain hydroxyl group of the serine supplies its oxygen atom to form the C-terminus of the beta chain, while the remainder of the serine residue undergoes an oxidative deamination to produce ammonia and the pyruvoyl prosthetic group on the alpha chain. During this reaction, the Ser that is part of the protease active site of the proenzyme becomes the pyruvoyl prosthetic group, which constitutes an essential element of the active site of the mature decarboxylase.

Its subcellular location is the cell membrane. The catalysed reaction is a 1,2-diacyl-sn-glycero-3-phospho-L-serine + H(+) = a 1,2-diacyl-sn-glycero-3-phosphoethanolamine + CO2. It participates in phospholipid metabolism; phosphatidylethanolamine biosynthesis; phosphatidylethanolamine from CDP-diacylglycerol: step 2/2. Functionally, catalyzes the formation of phosphatidylethanolamine (PtdEtn) from phosphatidylserine (PtdSer). This Bordetella parapertussis (strain 12822 / ATCC BAA-587 / NCTC 13253) protein is Phosphatidylserine decarboxylase proenzyme.